We begin with the raw amino-acid sequence, 256 residues long: L-erythrulose-1-phosphate isomerase (256 aa).

His96 serves as the catalytic Electrophile. The Proton acceptor role is filled by Glu169. Residues Gly175 and Ser212 each contribute to the substrate site.

The protein belongs to the triosephosphate isomerase family. Homodimer.

Its subcellular location is the cytoplasm. It catalyses the reaction L-erythrulose 1-phosphate = D-erythrulose 4-phosphate. It functions in the pathway carbohydrate metabolism; erythritol degradation. Catalyzes the isomerization of D-erythrulose-4P to L-erythrulose-1P. Involved in the degradation pathway of erythritol, that allows B.abortus to grow on this compound as the sole carbon source. This is L-erythrulose-1-phosphate isomerase from Brucella abortus (strain 2308).